A 117-amino-acid polypeptide reads, in one-letter code: Large ribosomal subunit protein bL19 (117 aa).

This sequence belongs to the bacterial ribosomal protein bL19 family.

Functionally, this protein is located at the 30S-50S ribosomal subunit interface and may play a role in the structure and function of the aminoacyl-tRNA binding site. The sequence is that of Large ribosomal subunit protein bL19 from Exiguobacterium sibiricum (strain DSM 17290 / CCUG 55495 / CIP 109462 / JCM 13490 / 255-15).